The chain runs to 214 residues: MEFIDLGLIPHGEAERIQLERLKQVMEGTAEDALYLLEHPPVVTLGRQGGLENLLISEEALKAMGAEVVQTARGGNITCHYPGQMVVYPVMRIEKRRGGIKKFFFDMEETAIRTAARFGVQAARSEGRPGVWVGPGKLCSIGIGVKKWITYHGLSFNVSSDMKLFDAITLCGLHGAHPTSLSREAGKEISTEEVKNVFREEFGKVFTDTAVAAS.

A BPL/LPL catalytic domain is found at 28–210 (GTAEDALYLL…EFGKVFTDTA (183 aa)). Substrate contacts are provided by residues 73 to 80 (RGGNITCH), 140 to 142 (SIG), and 153 to 155 (GLS). Cys171 (acyl-thioester intermediate) is an active-site residue.

This sequence belongs to the LipB family.

Its subcellular location is the cytoplasm. It carries out the reaction octanoyl-[ACP] + L-lysyl-[protein] = N(6)-octanoyl-L-lysyl-[protein] + holo-[ACP] + H(+). The protein operates within protein modification; protein lipoylation via endogenous pathway; protein N(6)-(lipoyl)lysine from octanoyl-[acyl-carrier-protein]: step 1/2. Its function is as follows. Catalyzes the transfer of endogenously produced octanoic acid from octanoyl-acyl-carrier-protein onto the lipoyl domains of lipoate-dependent enzymes. Lipoyl-ACP can also act as a substrate although octanoyl-ACP is likely to be the physiological substrate. The protein is Octanoyltransferase of Maridesulfovibrio salexigens (strain ATCC 14822 / DSM 2638 / NCIMB 8403 / VKM B-1763) (Desulfovibrio salexigens).